We begin with the raw amino-acid sequence, 118 residues long: Large ribosomal subunit protein bL19 (118 aa).

Belongs to the bacterial ribosomal protein bL19 family.

This protein is located at the 30S-50S ribosomal subunit interface and may play a role in the structure and function of the aminoacyl-tRNA binding site. In Marinobacter nauticus (strain ATCC 700491 / DSM 11845 / VT8) (Marinobacter aquaeolei), this protein is Large ribosomal subunit protein bL19.